Reading from the N-terminus, the 305-residue chain is Methionyl-tRNA formyltransferase (305 aa).

108–111 (SLLP) serves as a coordination point for (6S)-5,6,7,8-tetrahydrofolate.

It belongs to the Fmt family.

The enzyme catalyses L-methionyl-tRNA(fMet) + (6R)-10-formyltetrahydrofolate = N-formyl-L-methionyl-tRNA(fMet) + (6S)-5,6,7,8-tetrahydrofolate + H(+). Functionally, attaches a formyl group to the free amino group of methionyl-tRNA(fMet). The formyl group appears to play a dual role in the initiator identity of N-formylmethionyl-tRNA by promoting its recognition by IF2 and preventing the misappropriation of this tRNA by the elongation apparatus. This chain is Methionyl-tRNA formyltransferase, found in Thermus thermophilus (strain ATCC 27634 / DSM 579 / HB8).